A 160-amino-acid polypeptide reads, in one-letter code: Eukaryotic translation initiation factor 5A-3 (160 aa).

The segment covering 1 to 12 (MSDEEHHFESKA) has biased composition (basic and acidic residues). Residues 1 to 21 (MSDEEHHFESKADAGASKTYP) form a disordered region. Lys52 is subject to Hypusine.

The protein belongs to the eIF-5A family. Lys-52 undergoes hypusination, a unique post-translational modification that consists in the addition of a butylamino group from spermidine to lysine side chain, leading to the formation of the unusual amino acid hypusine. eIF-5As are the only known proteins to undergo this modification, which is essential for their function.

Translation factor that promotes translation elongation and termination, particularly upon ribosome stalling at specific amino acid sequence contexts. Binds between the exit (E) and peptidyl (P) site of the ribosome and promotes rescue of stalled ribosome: specifically required for efficient translation of polyproline-containing peptides as well as other motifs that stall the ribosome. Acts as a ribosome quality control (RQC) cofactor by joining the RQC complex to facilitate peptidyl transfer during CAT tailing step. The sequence is that of Eukaryotic translation initiation factor 5A-3 (EIF5A3) from Solanum tuberosum (Potato).